Consider the following 210-residue polypeptide: Large ribosomal subunit protein uL3 (210 aa).

Positions glycine 132 to proline 144 are enriched in basic residues. A disordered region spans residues glycine 132–proline 152.

This sequence belongs to the universal ribosomal protein uL3 family. Part of the 50S ribosomal subunit. Forms a cluster with proteins L14 and L19.

In terms of biological role, one of the primary rRNA binding proteins, it binds directly near the 3'-end of the 23S rRNA, where it nucleates assembly of the 50S subunit. In Heliobacterium modesticaldum (strain ATCC 51547 / Ice1), this protein is Large ribosomal subunit protein uL3.